We begin with the raw amino-acid sequence, 194 residues long: Protein ORF31 (194 aa).

An N-terminal signal peptide occupies residues 1 to 25 (MKSVASPLCQFHGVFCLYQCRQCLA).

It belongs to the herpesviridae UL92 family. In terms of assembly, interacts with ORF34.

Its subcellular location is the host nucleus. It is found in the host cytoplasm. Its function is as follows. Plays an important role in the expression of late genes. May play a role in viral replication. In Homo sapiens (Human), this protein is Protein ORF31 (ORF31).